The following is a 1158-amino-acid chain: ATP-dependent helicase/deoxyribonuclease subunit B (1158 aa).

This sequence belongs to the helicase family. AddB/RexB type 2 subfamily. In terms of assembly, heterodimer of AddA and RexB. Requires Mg(2+) as cofactor.

Functionally, the heterodimer acts as both an ATP-dependent DNA helicase and an ATP-dependent, dual-direction single-stranded exonuclease. Recognizes the chi site generating a DNA molecule suitable for the initiation of homologous recombination. This subunit has 5' -&gt; 3' nuclease activity but not helicase activity. The protein is ATP-dependent helicase/deoxyribonuclease subunit B of Lactobacillus johnsonii (strain CNCM I-12250 / La1 / NCC 533).